The following is a 293-amino-acid chain: MIFPLLLTLILPNFVAPKVLEPEKDDEIAVSTQREKTFFDMKLILTKLPTFEPSKYGHINIPLRKKRGIALHPLQWASYLWPNAEVPYDIATHYTSTEKSIILSAMEAFKNVTCVRFRPRAATDKHYLQINKYFNVERCFSYIGRQSSRTLFGTPEGNVETRMRLDPACLRGNGRGIVMHELMHILGFYHEHQRDDRDRRIVGSAVHYNFKIYRRAKTLYMGAYDANSIMHYNFQNLPWQRRDHFSTSDIININTFYKCKNLLSSKLAPKVPISPTSTSTTAITTTNTTTTKL.

An N-terminal signal peptide occupies residues Met-1 to Pro-17. The propeptide occupies Lys-18 to Arg-67. Residues Arg-67 to Lys-260 form the Peptidase M12A domain. Asn-111 carries N-linked (GlcNAc...) asparagine glycosylation. Intrachain disulfides connect Cys-114–Cys-259 and Cys-139–Cys-169. A Zn(2+)-binding site is contributed by His-180. The active site involves Glu-181. Zn(2+) contacts are provided by His-184 and His-190. N-linked (GlcNAc...) asparagine glycosylation occurs at Asn-287.

Zn(2+) is required as a cofactor.

It is found in the secreted. In terms of biological role, metalloprotease. This is Zinc metalloproteinase nas-2 (nas-2) from Caenorhabditis elegans.